The following is a 161-amino-acid chain: 2-C-methyl-D-erythritol 2,4-cyclodiphosphate synthase (161 aa).

A divalent metal cation contacts are provided by Asp-10 and His-12. 4-CDP-2-C-methyl-D-erythritol 2-phosphate-binding positions include 10–12 and 36–37; these read DVH and HS. His-44 lines the a divalent metal cation pocket. 4-CDP-2-C-methyl-D-erythritol 2-phosphate contacts are provided by residues 58–60, 63–67, 134–137, Phe-141, and Arg-144; these read DIG, FPDTD, and TTTE.

The protein belongs to the IspF family. In terms of assembly, homotrimer. The cofactor is a divalent metal cation.

The catalysed reaction is 4-CDP-2-C-methyl-D-erythritol 2-phosphate = 2-C-methyl-D-erythritol 2,4-cyclic diphosphate + CMP. It functions in the pathway isoprenoid biosynthesis; isopentenyl diphosphate biosynthesis via DXP pathway; isopentenyl diphosphate from 1-deoxy-D-xylulose 5-phosphate: step 4/6. In terms of biological role, involved in the biosynthesis of isopentenyl diphosphate (IPP) and dimethylallyl diphosphate (DMAPP), two major building blocks of isoprenoid compounds. Catalyzes the conversion of 4-diphosphocytidyl-2-C-methyl-D-erythritol 2-phosphate (CDP-ME2P) to 2-C-methyl-D-erythritol 2,4-cyclodiphosphate (ME-CPP) with a corresponding release of cytidine 5-monophosphate (CMP). The polypeptide is 2-C-methyl-D-erythritol 2,4-cyclodiphosphate synthase (Shewanella putrefaciens (strain CN-32 / ATCC BAA-453)).